Consider the following 396-residue polypeptide: MFDLFPIHGGVCAPEGFSADGIAAGLKKEGKLDVAFVHSLFPAKVSALFTTNRFAAAPIRYFQGLGEVFDCNFVLINAKNANAMTGAEGIEDIEWLMERLKHRFPSLVNPVMSSTGVIGARLPKEKIEASLGEIVLGKKEGARAAQAIMTTDAFSKEVAFKVELPDGRSFCIGAMAKGAGMIDPAMATMLCFITTDADVPENRMKELLQKAVHTTFNAISVDGDTSTNDTVMLFSNKASGVYEEEAFLMALERVMHKLATDVARDGEGAKKLVAFEVSGAASEEEAIKAAKALTTSLLVKTAIFGEDPNWGRIASTIGSSGVECDENRLRISFGEVLVYDRGAILFDKTIEEKAASVMRQESFKIHCDLGIGRGKFTAYGCDLGYEYVKINADYRT.

Residues threonine 150, lysine 177, threonine 188, glutamate 267, asparagine 391, and threonine 396 each contribute to the substrate site. Threonine 188 serves as the catalytic Nucleophile.

This sequence belongs to the ArgJ family. As to quaternary structure, heterotetramer of two alpha and two beta chains.

The protein localises to the cytoplasm. The enzyme catalyses N(2)-acetyl-L-ornithine + L-glutamate = N-acetyl-L-glutamate + L-ornithine. It catalyses the reaction L-glutamate + acetyl-CoA = N-acetyl-L-glutamate + CoA + H(+). It participates in amino-acid biosynthesis; L-arginine biosynthesis; L-ornithine and N-acetyl-L-glutamate from L-glutamate and N(2)-acetyl-L-ornithine (cyclic): step 1/1. The protein operates within amino-acid biosynthesis; L-arginine biosynthesis; N(2)-acetyl-L-ornithine from L-glutamate: step 1/4. In terms of biological role, catalyzes two activities which are involved in the cyclic version of arginine biosynthesis: the synthesis of N-acetylglutamate from glutamate and acetyl-CoA as the acetyl donor, and of ornithine by transacetylation between N(2)-acetylornithine and glutamate. This Wolinella succinogenes (strain ATCC 29543 / DSM 1740 / CCUG 13145 / JCM 31913 / LMG 7466 / NCTC 11488 / FDC 602W) (Vibrio succinogenes) protein is Arginine biosynthesis bifunctional protein ArgJ.